A 617-amino-acid polypeptide reads, in one-letter code: ATP-dependent rRNA helicase SPB4 (617 aa).

The Q motif motif lies at 7–35 (WADLDYELQPWIKKAINVSGFDSMTPVQA). The Helicase ATP-binding domain occupies 38-224 (IPMFAKNKDV…KTGLRNPVKI (187 aa)). ATP is bound at residue 51–58 (SVTGSGKT). The DEAD box motif lies at 172–175 (DEAD). Positions 252 to 406 (NLIHIMNNIR…ETDINKNKIS (155 aa)) constitute a Helicase C-terminal domain.

The protein belongs to the DEAD box helicase family. DDX55/SPB4 subfamily. As to quaternary structure, component of pre-60S ribosomal complexes.

The protein localises to the nucleus. It localises to the nucleolus. The enzyme catalyses ATP + H2O = ADP + phosphate + H(+). Functionally, ATP-binding RNA helicase involved in the biogenesis of 60S ribosomal subunits. Binds 90S pre-ribosomal particles and dissociates from pre-60S ribosomal particles after processing of 27SB pre-rRNA. Required for the normal formation of 18S rRNA through the processing of pre-rRNAs at sites A0, A1 and A2, and the normal formation of 25S and 5.8S rRNAs through the processing of pre-rRNAs at sites C1 and C2. The polypeptide is ATP-dependent rRNA helicase SPB4 (Candida glabrata (strain ATCC 2001 / BCRC 20586 / JCM 3761 / NBRC 0622 / NRRL Y-65 / CBS 138) (Yeast)).